A 1158-amino-acid polypeptide reads, in one-letter code: Putative HERC2-like protein 3 (1158 aa).

Residues proline 281 to glutamate 302 form a disordered region. The segment covering threonine 293–glutamate 302 has biased composition (acidic residues). One can recognise an MIB/HERC2 domain in the interval serine 587–proline 660. The segment at proline 662 to asparagine 684 is disordered. Acidic residues predominate over residues glutamate 668 to glutamate 679.

This Homo sapiens (Human) protein is Putative HERC2-like protein 3 (HERC2P3).